Reading from the N-terminus, the 326-residue chain is Tagatose 1,6-diphosphate aldolase (326 aa).

This sequence belongs to the aldolase LacD family.

The catalysed reaction is D-tagatofuranose 1,6-bisphosphate = D-glyceraldehyde 3-phosphate + dihydroxyacetone phosphate. It participates in carbohydrate metabolism; D-tagatose 6-phosphate degradation; D-glyceraldehyde 3-phosphate and glycerone phosphate from D-tagatose 6-phosphate: step 2/2. This Staphylococcus aureus (strain bovine RF122 / ET3-1) protein is Tagatose 1,6-diphosphate aldolase.